A 717-amino-acid chain; its full sequence is Probable metal-nicotianamine transporter YSL12 (717 aa).

The disordered stretch occupies residues Met1 to Val56. The next 14 membrane-spanning stretches (helical) occupy residues Ala76 to Leu96, Gly99 to Trp119, Cys144 to Met164, Ile186 to Pro206, Leu248 to Gly268, Ile306 to Ile326, Val351 to Ile371, Val422 to Phe442, Ile450 to Leu470, Leu482 to Leu502, Phe536 to Leu556, Leu593 to Leu613, Phe636 to Trp656, and Val671 to Leu691.

This sequence belongs to the YSL (TC 2.A.67.2) family. Expressed in root cortex and stele.

Its subcellular location is the membrane. In terms of biological role, may be involved in the transport of nicotianamine-chelated metals. The chain is Probable metal-nicotianamine transporter YSL12 (YSL12) from Oryza sativa subsp. japonica (Rice).